A 124-amino-acid polypeptide reads, in one-letter code: Ribonuclease pancreatic (124 aa).

The span at 1 to 15 shows a compositional bias: basic and acidic residues; it reads KESPAKKFQRQHMDP. Residues 1–24 form a disordered region; it reads KESPAKKFQRQHMDPDSSSSNSSN. Substrate contacts are provided by lysine 7 and arginine 10. The active-site Proton acceptor is histidine 12. Asparagine 21 and asparagine 34 each carry an N-linked (GlcNAc...) asparagine glycan. Cystine bridges form between cysteine 26–cysteine 84, cysteine 40–cysteine 95, cysteine 58–cysteine 110, and cysteine 65–cysteine 72. Substrate-binding positions include 41–45 and lysine 66; that span reads KPVNT. Asparagine 76 carries N-linked (GlcNAc...) asparagine glycosylation. Residue arginine 85 participates in substrate binding. The Proton donor role is filled by histidine 119.

Belongs to the pancreatic ribonuclease family. In terms of assembly, monomer. Interacts with and forms tight 1:1 complexes with RNH1. Dimerization of two such complexes may occur. Interaction with RNH1 inhibits this protein. In terms of tissue distribution, pancreas.

It is found in the secreted. It catalyses the reaction an [RNA] containing cytidine + H2O = an [RNA]-3'-cytidine-3'-phosphate + a 5'-hydroxy-ribonucleotide-3'-[RNA].. The enzyme catalyses an [RNA] containing uridine + H2O = an [RNA]-3'-uridine-3'-phosphate + a 5'-hydroxy-ribonucleotide-3'-[RNA].. Functionally, endonuclease that catalyzes the cleavage of RNA on the 3' side of pyrimidine nucleotides. Acts on single-stranded and double-stranded RNA. The polypeptide is Ribonuclease pancreatic (RNASE1) (Sus scrofa (Pig)).